A 469-amino-acid chain; its full sequence is Glutamine synthetase (469 aa).

The 82-residue stretch at 15-96 (NDVKFIDVRF…INFFIHDPIT (82 aa)) folds into the GS beta-grasp domain. One can recognise a GS catalytic domain in the interval 104-469 (PRNIAKKAEA…PHEFELYFDI (366 aa)). Residues Glu-129 and Glu-131 each coordinate Mg(2+). Glu-205 provides a ligand contact to ATP. Mg(2+) is bound by residues Glu-210 and Glu-218. 221–223 (YKF) is an ATP binding site. Residues 262–263 (NG) and Gly-263 each bind L-glutamate. His-267 contacts Mg(2+). Residues 269 to 271 (HQS) and Ser-271 contribute to the ATP site. L-glutamate is bound by residues Arg-320, Glu-326, and Arg-338. The ATP site is built by Arg-338, Arg-343, and Lys-352. A Mg(2+)-binding site is contributed by Glu-357. Arg-359 is an L-glutamate binding site. The residue at position 397 (Tyr-397) is an O-AMP-tyrosine.

This sequence belongs to the glutamine synthetase family. Oligomer of 12 subunits arranged in the form of two hexagons. Mg(2+) serves as cofactor.

Its subcellular location is the cytoplasm. It catalyses the reaction L-glutamate + NH4(+) + ATP = L-glutamine + ADP + phosphate + H(+). Its activity is regulated as follows. The activity of this enzyme could be controlled by adenylation under conditions of abundant glutamine. Functionally, catalyzes the ATP-dependent biosynthesis of glutamine from glutamate and ammonia. This Streptomyces filamentosus (Streptomyces roseosporus) protein is Glutamine synthetase.